We begin with the raw amino-acid sequence, 368 residues long: Carbamoyl phosphate synthase small chain (368 aa).

Positions 1-178 (MKAVLGLEDG…GAAGAWKGSG (178 aa)) are CPSase. 3 residues coordinate L-glutamine: Ser-45, Gly-230, and Gly-232. The 187-residue stretch at 182–368 (HAVVVDLGIK…KVVKVLGGGL (187 aa)) folds into the Glutamine amidotransferase type-1 domain. The active-site Nucleophile is the Cys-257. L-glutamine-binding residues include Phe-258, Gln-261, Asn-299, Gly-301, and Tyr-302. Active-site residues include His-342 and Glu-344.

This sequence belongs to the CarA family. As to quaternary structure, composed of two chains; the small (or glutamine) chain promotes the hydrolysis of glutamine to ammonia, which is used by the large (or ammonia) chain to synthesize carbamoyl phosphate. Tetramer of heterodimers (alpha,beta)4.

It catalyses the reaction hydrogencarbonate + L-glutamine + 2 ATP + H2O = carbamoyl phosphate + L-glutamate + 2 ADP + phosphate + 2 H(+). The enzyme catalyses L-glutamine + H2O = L-glutamate + NH4(+). It participates in amino-acid biosynthesis; L-arginine biosynthesis; carbamoyl phosphate from bicarbonate: step 1/1. It functions in the pathway pyrimidine metabolism; UMP biosynthesis via de novo pathway; (S)-dihydroorotate from bicarbonate: step 1/3. In terms of biological role, small subunit of the glutamine-dependent carbamoyl phosphate synthetase (CPSase). CPSase catalyzes the formation of carbamoyl phosphate from the ammonia moiety of glutamine, carbonate, and phosphate donated by ATP, constituting the first step of 2 biosynthetic pathways, one leading to arginine and/or urea and the other to pyrimidine nucleotides. The small subunit (glutamine amidotransferase) binds and cleaves glutamine to supply the large subunit with the substrate ammonia. The polypeptide is Carbamoyl phosphate synthase small chain (Methanosarcina mazei (strain ATCC BAA-159 / DSM 3647 / Goe1 / Go1 / JCM 11833 / OCM 88) (Methanosarcina frisia)).